The chain runs to 480 residues: MTSKRLGARFPGFLNRIGSGITRAARSDTTKRIPSAAGRAVERVAASEIGQRAIAGVVEGAATAALTGESVGESVKRAVILNVAGVHQTVPDPLNPVEIETQAKLRELDLANKREEAQIRHNKSMLQKEAQILGEVQHLMTVQEHVDQAKYEVRSGRALQAAQAIVKGERQQLDRVTKALIRENEMRTTDERKLIEGMRHNYSALAKSVDADSALIEEAVEQTVDIGGEIAEHATASIPFVGEAVSAGMATARGAMQIYRLGKTIHAITGLHTNHCEIPAIHQGAIETLLTSDSPTSDASLAQITSSRVRHLREIESELAHLDAEVKPAMQQMCQDIAKLAPDHLKKRRGVIHMNAAHELRVPLKQRPMIHSYTSPWDSDYVLILHVVGPYHSGQAFVFCLDLALDQFHFEEDTGSKPPVPPPRHRAPADFSARPAPISLSPLLAILTQRGCIGPGWPRVLMIRPCISALYRTRPPTRRC.

Residues Met-1–Glu-48 are involved in membrane permeabilization.

The protein belongs to the orbivirus VP5 family.

It localises to the virion. Its function is as follows. VP5 protein is one of the two proteins (with VP2) which constitute the virus particle outer capsid. Acts as a membrane permeabilization protein that mediates release of viral particles from endosomal compartments into the cytoplasm. Permeabilization activity is probably negatively regulated by VP2 and is triggered by endosomal degradation of VP2 and exposure to low pH. The sequence is that of Outer capsid protein VP5 (Segment-6) from Ixodes (gulls).